We begin with the raw amino-acid sequence, 141 residues long: Hemoglobin subunit alpha-1 (141 aa).

The region spanning Val1–Arg141 is the Globin domain. Residue His58 coordinates O2. His87 is a heme b binding site.

This sequence belongs to the globin family. Heterotetramer of two alpha chains and two beta chains. Red blood cells.

Involved in oxygen transport from the lung to the various peripheral tissues. This Tadarida brasiliensis (Brazilian free-tailed bat) protein is Hemoglobin subunit alpha-1.